The following is a 241-amino-acid chain: Ribonuclease P protein component 3 (241 aa).

Belongs to the eukaryotic/archaeal RNase P protein component 3 family. As to quaternary structure, consists of a catalytic RNA component and at least 4-5 protein subunits.

The protein localises to the cytoplasm. It carries out the reaction Endonucleolytic cleavage of RNA, removing 5'-extranucleotides from tRNA precursor.. Functionally, part of ribonuclease P, a protein complex that generates mature tRNA molecules by cleaving their 5'-ends. This Methanococcoides burtonii (strain DSM 6242 / NBRC 107633 / OCM 468 / ACE-M) protein is Ribonuclease P protein component 3.